The primary structure comprises 1662 residues: Cortactin-binding protein 2 (1662 aa).

5 disordered regions span residues 1-23 (MATD…AGAA), 203-222 (KKKT…RSTE), 361-440 (SHSD…LHPG), 454-479 (GNAN…PTSR), and 498-618 (RFTS…PSID). A coiled-coil region spans residues 119–276 (KKMQERMSAQ…EQLKRGSDSK (158 aa)). Over residues 386-396 (PSTDSTPDPTS) the composition is skewed to low complexity. Positions 411 to 422 (QTPGIAPQNSQA) are enriched in polar residues. Arg-498 is subject to Asymmetric dimethylarginine. The span at 583-597 (TVASPPSSLPQGNRV) shows a compositional bias: polar residues. ANK repeat units lie at residues 709-739 (GRPT…DINY), 743-772 (DGHS…QINA), 776-805 (NGFT…NINH), 809-838 (GGQT…NRSV), 842-871 (DGWT…PACG), and 912-942 (EGWT…EPER). Residues 1450–1474 (GESGAWRKVNTSPRRKSGRFSLPTW) are disordered. A Phosphoserine modification is found at Ser-1524. Disordered regions lie at residues 1580–1602 (SQKE…KSKT) and 1618–1662 (SKVT…KPNK). A compositionally biased stretch (polar residues) spans 1582-1599 (KEVSPLSSHQTTECSNSK). A compositionally biased stretch (low complexity) spans 1624 to 1638 (SQNTKRSSSSSNTRQ). The segment covering 1639–1648 (IEINNNSKEN) has biased composition (polar residues). Over residues 1649 to 1662 (WNLHKNEHLDKPNK) the composition is skewed to basic and acidic residues.

As to quaternary structure, interacts with CTTN/cortactin SH3 domain. Interacts with STRN, STRN4/zinedin and MOB4/phocein; this interactions mediate the association with the STRIPAK core complex and may regulate dendritic spine distribution of the STRIPAK complex in hippocampal neurons. Activation of glutamate receptors weakens the interaction with STRN and STRN4.

The protein resides in the cytoplasm. It localises to the cell cortex. Its subcellular location is the cell projection. The protein localises to the dendritic spine. Regulates the dendritic spine distribution of CTTN/cortactin in hippocampal neurons, and thus controls dendritic spinogenesis and dendritic spine maintenance. Associates with the striatin-interacting phosphatase and kinase (STRIPAK) core complex to regulate dendritic spine distribution of the STRIPAK complex in hippocampal neurons. The protein is Cortactin-binding protein 2 (CTTNBP2) of Chlorocebus aethiops (Green monkey).